The primary structure comprises 691 residues: Methionine--tRNA ligase (691 aa).

A 'HIGH' region motif is present at residues 14–24; that stretch reads PYANGPFHLGH. Residues Cys-148, Cys-151, Cys-161, and Cys-164 each contribute to the Zn(2+) site. A 'KMSKS' region motif is present at residues 344-348; the sequence is KMSKS. Lys-347 contributes to the ATP binding site. Residues 585–691 enclose the tRNA-binding domain; sequence DFDRVDLRVA…PGAKPGMRVR (107 aa).

It belongs to the class-I aminoacyl-tRNA synthetase family. MetG type 1 subfamily. In terms of assembly, homodimer. The cofactor is Zn(2+).

The protein localises to the cytoplasm. The catalysed reaction is tRNA(Met) + L-methionine + ATP = L-methionyl-tRNA(Met) + AMP + diphosphate. In terms of biological role, is required not only for elongation of protein synthesis but also for the initiation of all mRNA translation through initiator tRNA(fMet) aminoacylation. This chain is Methionine--tRNA ligase, found in Verminephrobacter eiseniae (strain EF01-2).